We begin with the raw amino-acid sequence, 154 residues long: Urease accessory protein UreE (154 aa).

This sequence belongs to the UreE family.

Its subcellular location is the cytoplasm. Involved in urease metallocenter assembly. Binds nickel. Probably functions as a nickel donor during metallocenter assembly. This Prochlorococcus marinus subsp. pastoris (strain CCMP1986 / NIES-2087 / MED4) protein is Urease accessory protein UreE.